Reading from the N-terminus, the 417-residue chain is MSGLPEHLRRPPRGMRDWLPPQLYALIEMEERLSKVAESFGYRRVETPVVEHFEVLAKKAGQEVVNEIYYFKDKAGRDVGLRFDMTVPVARVISYNLDLPRPVRWYYFTKVFRYDEPQHGRYREFHQFGIELVGSASPRADAEVIQVFIEALEAAGARDYVVKINDRRAVDKLLESLGVLQHRDVIYRALDKKYKLPREQVVDIMTNGGVPIDKAERIYDASEEMTLEEAVDAVLRLDAGLGSFYQKLVGYLATAVPVDRLRFDMSIVRGLDYYTGVVFEAYVGKYRLAVGGGGRYDDLLELYSGVKMPALGFAIGVERLMEAVGLERVEKPLDYYIYIFDDGAYPHAVALAKKLRAAGHSVAIELGEKNLKDAFEYILKVGTKYLIIMGRRELERGVVKIRDLQRREEFEKPLAEF.

The protein belongs to the class-II aminoacyl-tRNA synthetase family.

It is found in the cytoplasm. It catalyses the reaction tRNA(His) + L-histidine + ATP = L-histidyl-tRNA(His) + AMP + diphosphate + H(+). The chain is Histidine--tRNA ligase from Pyrobaculum neutrophilum (strain DSM 2338 / JCM 9278 / NBRC 100436 / V24Sta) (Thermoproteus neutrophilus).